Consider the following 169-residue polypeptide: Lipoprotein signal peptidase (169 aa).

The next 4 membrane-spanning stretches (helical) occupy residues 4-24, 42-62, 70-90, and 102-122; these read PICSTGLRWLWLAVLVVIVDL, LIPFFNLTYAQNFGAAFSFLA, WFFAGIAIGISVLLMVLMYRS, and ALIIGGALGNLFDRMVHGAVI. Residues aspartate 123 and aspartate 141 contribute to the active site. A helical transmembrane segment spans residues 137–157; that stretch reads FNIADTAICIGAALVIFEGFI.

It belongs to the peptidase A8 family.

Its subcellular location is the cell inner membrane. It catalyses the reaction Release of signal peptides from bacterial membrane prolipoproteins. Hydrolyzes -Xaa-Yaa-Zaa-|-(S,diacylglyceryl)Cys-, in which Xaa is hydrophobic (preferably Leu), and Yaa (Ala or Ser) and Zaa (Gly or Ala) have small, neutral side chains.. It participates in protein modification; lipoprotein biosynthesis (signal peptide cleavage). Functionally, this protein specifically catalyzes the removal of signal peptides from prolipoproteins. This Yersinia enterocolitica serotype O:8 / biotype 1B (strain NCTC 13174 / 8081) protein is Lipoprotein signal peptidase.